The following is a 274-amino-acid chain: NAD kinase (274 aa).

Asp50 acts as the Proton acceptor in catalysis. Residues 50–51, 126–127, Arg152, Asp154, 165–170, and Ala189 each bind NAD(+); these read DG, NE, and TAYNKS.

Belongs to the NAD kinase family. A divalent metal cation serves as cofactor.

The protein resides in the cytoplasm. It carries out the reaction NAD(+) + ATP = ADP + NADP(+) + H(+). In terms of biological role, involved in the regulation of the intracellular balance of NAD and NADP, and is a key enzyme in the biosynthesis of NADP. Catalyzes specifically the phosphorylation on 2'-hydroxyl of the adenosine moiety of NAD to yield NADP. This is NAD kinase from Streptococcus gordonii (strain Challis / ATCC 35105 / BCRC 15272 / CH1 / DL1 / V288).